The chain runs to 749 residues: Catalase-peroxidase 2 (749 aa).

A signal peptide spans 1–27 (MFKRTIPLFAAFTLAISPSIFPNYAHA). The tryptophyl-tyrosyl-methioninium (Trp-Tyr) (with M-255) cross-link spans 107–229 (WHAAGTYRIY…LAATVMGLIY (123 aa)). The active-site Proton acceptor is histidine 108. A cross-link (tryptophyl-tyrosyl-methioninium (Tyr-Met) (with W-107)) is located at residues 229-255 (YVNPEGPNGVPDPLAAAEKIRETFGRM). Histidine 270 serves as a coordination point for heme b.

Belongs to the peroxidase family. Peroxidase/catalase subfamily. In terms of assembly, homodimer or homotetramer. Heme b serves as cofactor. Formation of the three residue Trp-Tyr-Met cross-link is important for the catalase, but not the peroxidase activity of the enzyme.

It carries out the reaction H2O2 + AH2 = A + 2 H2O. The enzyme catalyses 2 H2O2 = O2 + 2 H2O. Its function is as follows. Bifunctional enzyme with both catalase and broad-spectrum peroxidase activity. This chain is Catalase-peroxidase 2, found in Legionella pneumophila (strain Lens).